Here is a 526-residue protein sequence, read N- to C-terminus: Carotenoid cleavage oxygenase 1 (526 aa).

The segment at 1-33 (MAEYVFSDAPKDSHGNGVKDAVPGKQPEELPPA) is disordered. Positions 133 and 164 each coordinate piceatannol. Tyr-133 and Lys-164 together coordinate trans-resveratrol. His-197, His-248, and His-313 together coordinate Fe cation. Glu-383 is a binding site for piceatannol. Glu-383 contributes to the trans-resveratrol binding site. His-510 provides a ligand contact to Fe cation.

The protein belongs to the carotenoid oxygenase family. Fe(2+) serves as cofactor.

It catalyses the reaction trans-resveratrol + O2 = 3,5-dihydroxybenzaldehyde + 4-hydroxybenzaldehyde. The enzyme catalyses piceatannol + O2 = 3,5-dihydroxybenzaldehyde + 3,4-dihydroxybenzaldehyde. Dioxygenase that cleaves the interphenyl C-alpha-C-beta double bond of resveratrol to yield 3,5-dihydroxybenzaldehyde and 4-hydroxybenzaldehyde. Also cleaves piceatannol, a compound that differs from resveratrol only in the occurrence of an additional hydroxyl group, which leads to the production of 3,4-dihydroxybenzaldehyde and 3,5-hydroxybenzaldehyde. Is not able to cleave trans-stilbene, 4-monohydroxy-trans-stilbene, 3,5-dihydroxy-trans-stilbene (pinosylvin), trismethoxy-resveratrol, and 3,3',5-trihydroxy-4'-methoxystilbene-3-O-beta-D-glucoside. Is not involved in carotenoid metabolism. This chain is Carotenoid cleavage oxygenase 1, found in Neurospora crassa (strain ATCC 24698 / 74-OR23-1A / CBS 708.71 / DSM 1257 / FGSC 987).